A 245-amino-acid polypeptide reads, in one-letter code: Tryptophan synthase alpha chain (245 aa).

Catalysis depends on proton acceptor residues glutamate 37 and aspartate 48.

It belongs to the TrpA family. In terms of assembly, tetramer of two alpha and two beta chains.

It catalyses the reaction (1S,2R)-1-C-(indol-3-yl)glycerol 3-phosphate + L-serine = D-glyceraldehyde 3-phosphate + L-tryptophan + H2O. It participates in amino-acid biosynthesis; L-tryptophan biosynthesis; L-tryptophan from chorismate: step 5/5. The alpha subunit is responsible for the aldol cleavage of indoleglycerol phosphate to indole and glyceraldehyde 3-phosphate. The polypeptide is Tryptophan synthase alpha chain (Saccharolobus solfataricus (strain ATCC 35092 / DSM 1617 / JCM 11322 / P2) (Sulfolobus solfataricus)).